Here is a 573-residue protein sequence, read N- to C-terminus: Proline--tRNA ligase (573 aa).

The protein belongs to the class-II aminoacyl-tRNA synthetase family. ProS type 1 subfamily. In terms of assembly, homodimer.

It localises to the cytoplasm. The catalysed reaction is tRNA(Pro) + L-proline + ATP = L-prolyl-tRNA(Pro) + AMP + diphosphate. In terms of biological role, catalyzes the attachment of proline to tRNA(Pro) in a two-step reaction: proline is first activated by ATP to form Pro-AMP and then transferred to the acceptor end of tRNA(Pro). As ProRS can inadvertently accommodate and process non-cognate amino acids such as alanine and cysteine, to avoid such errors it has two additional distinct editing activities against alanine. One activity is designated as 'pretransfer' editing and involves the tRNA(Pro)-independent hydrolysis of activated Ala-AMP. The other activity is designated 'posttransfer' editing and involves deacylation of mischarged Ala-tRNA(Pro). The misacylated Cys-tRNA(Pro) is not edited by ProRS. This Moorella thermoacetica (strain ATCC 39073 / JCM 9320) protein is Proline--tRNA ligase.